The sequence spans 152 residues: Arginine repressor (152 aa).

This sequence belongs to the ArgR family.

The protein resides in the cytoplasm. Its pathway is amino-acid biosynthesis; L-arginine biosynthesis [regulation]. In terms of biological role, regulates arginine biosynthesis genes. This is Arginine repressor from Caldicellulosiruptor bescii (strain ATCC BAA-1888 / DSM 6725 / KCTC 15123 / Z-1320) (Anaerocellum thermophilum).